A 353-amino-acid polypeptide reads, in one-letter code: D-alanine--D-alanine ligase (353 aa).

In terms of domain architecture, ATP-grasp spans 135-344; it reads KMVFAQAGLA…FPQLVDRLVQ (210 aa). 171 to 226 is a binding site for ATP; it reads EAQLDYPMFVKPANLGSSVGISKVRTRDELEKALDLAAEYDRRLIVEAGVTAREVE. Residues Asp-297, Glu-311, and Asn-313 each coordinate Mg(2+).

Belongs to the D-alanine--D-alanine ligase family. Mg(2+) serves as cofactor. The cofactor is Mn(2+).

Its subcellular location is the cytoplasm. It catalyses the reaction 2 D-alanine + ATP = D-alanyl-D-alanine + ADP + phosphate + H(+). Its pathway is cell wall biogenesis; peptidoglycan biosynthesis. Cell wall formation. The polypeptide is D-alanine--D-alanine ligase (Picosynechococcus sp. (strain ATCC 27264 / PCC 7002 / PR-6) (Agmenellum quadruplicatum)).